The primary structure comprises 224 residues: tRNA (guanine-N(7)-)-methyltransferase (224 aa).

Residues E54, E79, E106, and D129 each contribute to the S-adenosyl-L-methionine site. The active site involves D129. Residues K133 and D165 each contribute to the substrate site.

This sequence belongs to the class I-like SAM-binding methyltransferase superfamily. TrmB family.

The catalysed reaction is guanosine(46) in tRNA + S-adenosyl-L-methionine = N(7)-methylguanosine(46) in tRNA + S-adenosyl-L-homocysteine. The protein operates within tRNA modification; N(7)-methylguanine-tRNA biosynthesis. Catalyzes the formation of N(7)-methylguanine at position 46 (m7G46) in tRNA. The chain is tRNA (guanine-N(7)-)-methyltransferase from Chlamydia caviae (strain ATCC VR-813 / DSM 19441 / 03DC25 / GPIC) (Chlamydophila caviae).